The primary structure comprises 312 residues: Protein-methionine-sulfoxide reductase catalytic subunit MsrP (312 aa).

The tat-type signal signal peptide spans 1–47; it reads MLIRRPPDLLPSEITPEPLARGRRALLKGLGAGAALAGLGLPQISQA. Residues Asn74, 77 to 78, Cys133, Thr168, Asn216, Arg221, and 232 to 234 contribute to the Mo-molybdopterin site; these read YE and SAK.

It belongs to the MsrP family. Heterodimer of a catalytic subunit (MsrP) and a heme-binding subunit (MsrQ). It depends on Mo-molybdopterin as a cofactor. Post-translationally, predicted to be exported by the Tat system. The position of the signal peptide cleavage has not been experimentally proven.

Its subcellular location is the periplasm. The catalysed reaction is L-methionyl-[protein] + a quinone + H2O = L-methionyl-(R)-S-oxide-[protein] + a quinol. Its function is as follows. Part of the MsrPQ system that repairs oxidized periplasmic proteins containing methionine sulfoxide residues (Met-O), using respiratory chain electrons. Thus protects these proteins from oxidative-stress damage caused by reactive species of oxygen and chlorine generated by the host defense mechanisms. MsrPQ is essential for the maintenance of envelope integrity under bleach stress, rescuing a wide series of structurally unrelated periplasmic proteins from methionine oxidation. The catalytic subunit MsrP is non-stereospecific, being able to reduce both (R-) and (S-) diastereoisomers of methionine sulfoxide. Involved in protection against reactive chlorine species (RCS) generated by chlorite and hypochlorite. The chain is Protein-methionine-sulfoxide reductase catalytic subunit MsrP from Azospira oryzae (strain ATCC BAA-33 / DSM 13638 / PS) (Dechlorosoma suillum).